The following is a 315-amino-acid chain: Nucleotide-binding protein CGSHiEE_06315 (315 aa).

ATP is bound at residue 8–15 (GRSGAGKS). 56–59 (DIRN) is a GTP binding site.

Belongs to the RapZ-like family.

Displays ATPase and GTPase activities. The sequence is that of Nucleotide-binding protein CGSHiEE_06315 from Haemophilus influenzae (strain PittEE).